Consider the following 204-residue polypeptide: Small ribosomal subunit protein uS4 (204 aa).

Residues Ser-93–Glu-156 form the S4 RNA-binding domain.

Belongs to the universal ribosomal protein uS4 family. Part of the 30S ribosomal subunit. Contacts protein S5. The interaction surface between S4 and S5 is involved in control of translational fidelity.

One of the primary rRNA binding proteins, it binds directly to 16S rRNA where it nucleates assembly of the body of the 30S subunit. Functionally, with S5 and S12 plays an important role in translational accuracy. This is Small ribosomal subunit protein uS4 from Wolbachia pipientis wMel.